Consider the following 150-residue polypeptide: Ribosomal RNA large subunit methyltransferase H (150 aa).

S-adenosyl-L-methionine-binding positions include leucine 68, glycine 97, and 116–121 (LSAMTL).

It belongs to the RNA methyltransferase RlmH family. In terms of assembly, homodimer.

The protein resides in the cytoplasm. The enzyme catalyses pseudouridine(1915) in 23S rRNA + S-adenosyl-L-methionine = N(3)-methylpseudouridine(1915) in 23S rRNA + S-adenosyl-L-homocysteine + H(+). In terms of biological role, specifically methylates the pseudouridine at position 1915 (m3Psi1915) in 23S rRNA. This is Ribosomal RNA large subunit methyltransferase H from Prochlorococcus marinus (strain MIT 9303).